The chain runs to 278 residues: Protein saf1 (278 aa).

Disordered stretches follow at residues 1 to 43 (MLSK…RNMS), 81 to 210 (KKNI…DIEE), and 240 to 264 (QKLAKGQKIGQPDRDVSSQVQEDKD). Basic and acidic residues-rich tracts occupy residues 22-38 (QIKVREERAKRHEERLS) and 90-103 (GRVESDKTKEAERQ). Basic residues-rich tracts occupy residues 104 to 116 (HKPRKPFIPKNPK) and 169 to 183 (REKKNKSFKPKHHKK). Residues 186-202 (INASSAQPKSTTTTEAA) show a composition bias toward polar residues.

Its subcellular location is the nucleus. The protein resides in the nucleolus. In Schizosaccharomyces pombe (strain 972 / ATCC 24843) (Fission yeast), this protein is Protein saf1 (saf1).